Consider the following 992-residue polypeptide: Meckelin (992 aa).

The first 36 residues, Met-1 to Ala-36, serve as a signal peptide directing secretion. Positions Gln-37 to Gly-280 are cysteine-rich. Over Gln-37 to Asp-516 the chain is Extracellular. 12 cysteine pairs are disulfide-bonded: Cys-49–Cys-62, Cys-65–Cys-78, Cys-80–Cys-97, Cys-100–Cys-114, Cys-117–Cys-127, Cys-129–Cys-150, Cys-153–Cys-170, Cys-173–Cys-184, Cys-186–Cys-197, Cys-237–Cys-246, Cys-253–Cys-268, and Cys-354–Cys-375. Residue Asn-242 is glycosylated (N-linked (GlcNAc...) asparagine). The helical transmembrane segment at Ala-517–Arg-545 threads the bilayer. At Arg-546–Gln-555 the chain is on the cytoplasmic side. Residues Thr-556–Phe-587 traverse the membrane as a helical segment. Topologically, residues Lys-588–Pro-600 are extracellular. The chain crosses the membrane as a helical span at residues Val-601–Gln-628. The Cytoplasmic segment spans residues Ile-629–Thr-667. The segment at residues Tyr-668–Glu-676 is an intramembrane region (helical). A discontinuously helical membrane pass occupies residues Tyr-668–Val-698. Residues Ile-677–Pro-685 lie within the membrane without spanning it. The helical intramembrane region spans Leu-686 to Val-698. At Val-699–Leu-728 the chain is on the extracellular side. Residues Arg-729–Arg-754 constitute an intramembrane region (helical). Residues Arg-729 to Ser-768 traverse the membrane as a discontinuously helical segment. An intramembrane segment occupies Phe-755–Lys-759. The helical intramembrane region spans Ile-760 to Ser-768. Residues Met-769 to Ser-923 lie on the Cytoplasmic side of the membrane. The helical intramembrane region spans Phe-924 to Ser-926. The chain crosses the membrane as a discontinuously helical span at residues Phe-924 to Leu-949. An intramembrane segment occupies Val-927–Glu-933. Positions Ala-934 to Leu-949 form an intramembrane region, helical. The Extracellular portion of the chain corresponds to Ala-950–Phe-954. Residues Val-955–Thr-982 traverse the membrane as a helical segment. Topologically, residues Lys-983–Ile-992 are cytoplasmic.

In terms of assembly, homodimer. Part of the tectonic-like complex (also named B9 complex). Interacts with DNAJB9, DNAJC10 and mutated SFTPC. Interacts with SYNE2 during the early establishment of cell polarity. Interacts (via C-terminus) with FLNA. Interacts with TMEM218. Interacts with WNT5A. Interacts with ROR2.

The protein localises to the cell membrane. It localises to the endoplasmic reticulum membrane. The protein resides in the cytoplasm. It is found in the cytoskeleton. Its subcellular location is the cilium basal body. Its function is as follows. Part of the tectonic-like complex which is required for tissue-specific ciliogenesis and may regulate ciliary membrane composition. Involved in centrosome migration to the apical cell surface during early ciliogenesis. Required for ciliary structure and function, including a role in regulating length and appropriate number through modulating centrosome duplication. Is a key regulator of stereociliary bundle orientation. Required for epithelial cell branching morphology. Essential for endoplasmic reticulum-associated degradation (ERAD) of surfactant protein C (sftpc). Involved in the negative regulation of canonical Wnt signaling, and activation of the non-canonical cascade stimulated by WNT5A. In non-canonical Wnt signaling, it may act as ROR2 coreceptor. The polypeptide is Meckelin (Tmem67) (Mus musculus (Mouse)).